Consider the following 273-residue polypeptide: Large ribosomal subunit protein uL2cy (273 aa).

Disordered regions lie at residues 1 to 27 and 224 to 273; these read MAIH…SNPR and NPVD…RRRK.

The protein belongs to the universal ribosomal protein uL2 family. Part of the 50S ribosomal subunit.

The protein resides in the plastid. It localises to the chloroplast. The polypeptide is Large ribosomal subunit protein uL2cy (rpl2-B) (Liriodendron tulipifera (Tuliptree)).